Here is an 877-residue protein sequence, read N- to C-terminus: Clumping factor B (877 aa).

Positions 1–44 are cleaved as a signal peptide; sequence MKKRIDYLSNKQNKYSIRRFTVGTTSVIVGATILFGIGNHQAQA. The YSIRK-G/S signaling motif signature appears at 15–26; it reads YSIRRFTVGTTS. Polar residues-rich tracts occupy residues 44–61 and 68–95; these read ASEQ…NASA and MIET…NVDS. The disordered stretch occupies residues 44–192; sequence ASEQSNDTTQ…QGTSKPSVRT (149 aa). The ligand binding A region stretch occupies residues 45–542; it reads SEQSNDTTQS…GSADGDSAVN (498 aa). Residues 96–119 show a composition bias toward low complexity; that stretch reads TTKPMSTQTSNTTTTEPASTNETP. A compositionally biased stretch (polar residues) spans 120 to 189; it reads QPTAIKNQAT…SNAQGTSKPS (70 aa). Residues 272–276 carry the MIDAS-like motif motif; sequence DYSNS. Positions 530–849 are disordered; it reads YGGGSADGDS…ETGDKSENTN (320 aa). Pro residues predominate over residues 545-555; the sequence is DPTPGPPVDPE. Positions 556–801 are enriched in acidic residues; sequence PSPDPEPEPT…SDSDSDSDSD (246 aa). A compositionally biased stretch (polar residues) spans 805–816; it reads RVTPPNNEQKAP. The span at 833–846 shows a compositional bias: basic and acidic residues; it reads HKTDALPETGDKSE. An LPXTG sorting signal motif is present at residues 838-842; the sequence is LPETG. Threonine 841 is modified (pentaglycyl murein peptidoglycan amidated threonine). Positions 842 to 877 are cleaved as a propeptide — removed by sortase; the sequence is GDKSENTNATLFGAMMALLGSLLLFRKRKQDHKEKA.

Belongs to the serine-aspartate repeat-containing protein (SDr) family. Proteolytically cleaved by aureolysin (aur). This cleavage leads to the inactivation of ClfB.

It localises to the secreted. The protein localises to the cell wall. Its function is as follows. Cell surface-associated protein implicated in virulence by promoting bacterial attachment to both alpha- and beta-chains of human fibrinogen and inducing the formation of bacterial clumps. This is Clumping factor B (clfB) from Staphylococcus aureus (strain Mu50 / ATCC 700699).